We begin with the raw amino-acid sequence, 257 residues long: Large ribosomal subunit protein uL2 (257 aa).

The interval Val-207–Arg-226 is disordered.

This sequence belongs to the universal ribosomal protein uL2 family. As to quaternary structure, component of the large ribosomal subunit.

It is found in the cytoplasm. In terms of biological role, component of the large ribosomal subunit. The ribosome is a large ribonucleoprotein complex responsible for the synthesis of proteins in the cell. The protein is Large ribosomal subunit protein uL2 (rpl8) of Ictalurus punctatus (Channel catfish).